A 25-amino-acid polypeptide reads, in one-letter code: Mu-conotoxin CnIIIB (25 aa).

A Pyrrolidone carboxylic acid; partial modification is found at Gln1. 3 cysteine pairs are disulfide-bonded: Cys3–Cys15, Cys4–Cys21, and Cys10–Cys22.

This sequence belongs to the conotoxin M superfamily. As to expression, expressed by the venom duct.

It localises to the secreted. Mu-conotoxins block voltage-gated sodium channels (Nav). This synthetic toxin blocks slightly but irreversibly tetrodotoxin-resistant VGSCs. This Conus consors (Singed cone) protein is Mu-conotoxin CnIIIB.